The primary structure comprises 449 residues: Putative F-box/LRR-repeat protein At3g44090 (449 aa).

An F-box domain is found at 23 to 77; sequence LASMDCLPDDLLVQILYFLPTKEAISTSLLSKRWRTLYSLVHNLDLDDYIFWHHE. LRR repeat units lie at residues 133–163, 186–212, 214–231, 247–278, 286–311, and 320–345; these read YYNLQKDSLWQFGFPYKVFTSTKLVKLSLGT, YIWFEDNQLSDVFLAACPALEDLTIHH, FRPFLISSKNLKKLSVTI, TPNVVDLYYSDFPRPIAPHCHLDSLAKVELDL, RQVQNDADVKNLISEIRNVKTLHLTY, and SKKRDWKVLPLLLERSPNLKTLVLSG.

The chain is Putative F-box/LRR-repeat protein At3g44090 from Arabidopsis thaliana (Mouse-ear cress).